The primary structure comprises 389 residues: 8-amino-7-oxononanoate synthase (389 aa).

Substrate is bound at residue Arg18. Residue 104 to 105 participates in pyridoxal 5'-phosphate binding; the sequence is GY. His129 lines the substrate pocket. Pyridoxal 5'-phosphate-binding residues include Ser176, His204, and Thr232. Lys235 carries the N6-(pyridoxal phosphate)lysine modification. Thr351 serves as a coordination point for substrate.

It belongs to the class-II pyridoxal-phosphate-dependent aminotransferase family. BioF subfamily. As to quaternary structure, homodimer. The cofactor is pyridoxal 5'-phosphate.

The enzyme catalyses 6-carboxyhexanoyl-[ACP] + L-alanine + H(+) = (8S)-8-amino-7-oxononanoate + holo-[ACP] + CO2. It participates in cofactor biosynthesis; biotin biosynthesis. Functionally, catalyzes the decarboxylative condensation of pimeloyl-[acyl-carrier protein] and L-alanine to produce 8-amino-7-oxononanoate (AON), [acyl-carrier protein], and carbon dioxide. This chain is 8-amino-7-oxononanoate synthase, found in Citrifermentans bemidjiense (strain ATCC BAA-1014 / DSM 16622 / JCM 12645 / Bem) (Geobacter bemidjiensis).